The sequence spans 95 residues: uncharacterized protein (95 aa).

The interval methionine 1–threonine 64 is disordered. The segment covering lysine 18–alanine 28 has biased composition (basic and acidic residues). Residues threonine 35–aspartate 49 are compositionally biased toward polar residues.

This is an uncharacterized protein from Schizosaccharomyces pombe (strain 972 / ATCC 24843) (Fission yeast).